The sequence spans 533 residues: Cytochrome P450 9e2 (533 aa).

Cys-475 contacts heme.

This sequence belongs to the cytochrome P450 family. Requires heme as cofactor.

The protein localises to the endoplasmic reticulum membrane. Its subcellular location is the microsome membrane. In Blattella germanica (German cockroach), this protein is Cytochrome P450 9e2 (CYP9E2).